The primary structure comprises 395 residues: Isoafricanol synthase (395 aa).

Mg(2+) is bound by residues D95, N246, S250, and E254. Over residues 346–357 (TEAVSGGRERPW) the composition is skewed to basic and acidic residues. The segment at 346-395 (TEAVSGGRERPWARLTGAEDLIRAGRGAPPPPGSGPDTRQPMPSEPSQLA) is disordered.

Belongs to the terpene synthase family. It depends on Mg(2+) as a cofactor.

The catalysed reaction is (2E,6E)-farnesyl diphosphate + H2O = (+)-isoafricanol + diphosphate. In terms of biological role, catalyzes the cyclization of farnesyl diphosphate (FPP) to isoafricanol. This chain is Isoafricanol synthase, found in Streptomyces malaysiensis.